Reading from the N-terminus, the 236-residue chain is Glucosamine-6-phosphate deaminase (236 aa).

Asp-62 functions as the Proton acceptor; for enolization step in the catalytic mechanism. Residue Asn-128 is the For ring-opening step of the active site. The Proton acceptor; for ring-opening step role is filled by His-130. Glu-135 serves as the catalytic For ring-opening step.

This sequence belongs to the glucosamine/galactosamine-6-phosphate isomerase family. NagB subfamily.

The catalysed reaction is alpha-D-glucosamine 6-phosphate + H2O = beta-D-fructose 6-phosphate + NH4(+). Its pathway is amino-sugar metabolism; N-acetylneuraminate degradation; D-fructose 6-phosphate from N-acetylneuraminate: step 5/5. In terms of biological role, catalyzes the reversible isomerization-deamination of glucosamine 6-phosphate (GlcN6P) to form fructose 6-phosphate (Fru6P) and ammonium ion. The protein is Glucosamine-6-phosphate deaminase of Lacticaseibacillus paracasei (strain ATCC 334 / BCRC 17002 / CCUG 31169 / CIP 107868 / KCTC 3260 / NRRL B-441) (Lactobacillus paracasei).